A 1042-amino-acid chain; its full sequence is Aldehyde reductase lnaA (1042 aa).

An adenylation (A) domain region spans residues 29 to 425; the sequence is HAFLNPSAMA…GRRDHQVKVR (397 aa). The region spanning 532-609 is the Carrier domain; it reads DNEDSTRGKL…RLAGILEERI (78 aa). Residue Ser569 is modified to O-(pantetheine 4'-phosphoryl)serine. Residues 655-897 form a short-chain dehydrogenase/reductase (R) domain region; the sequence is LTGATGFVGS…FVPVDYVNAV (243 aa).

This sequence belongs to the NRP synthetase family.

The catalysed reaction is L-tyrosinal + AMP + diphosphate + NADP(+) = L-tyrosine + ATP + NADPH + H(+). Its pathway is secondary metabolite biosynthesis. In terms of biological role, non-canonical nonribosomal peptide synthetase; part of the lna gene cluster that mediates the biosynthesis of diastereomeric piperazines. Lna and lnb clusters encode sets of enzymes that produce overlapping sets of previously undescribed metabolites such as piperazinomycin-like metabolites or morpholine. The lna and lnb biosynthetic pathways appear to be part of a signaling network that controls the formation of sclerotia, a resilient overwintering structure. One primary function of the non-canonical nonribosomal peptide synthetases lnaA and lnbA consists in the reduction of L-tyrosine. The presence in the clusters of tailoring enzymes such as the oxidoreductases lnaB, lnbB, lnaE or lnbE, as well as of the cytochrome P450 monooxygenases lnaC, lnaD, or lnbC, might explain formation of various diastereomeric piperazines. This chain is Aldehyde reductase lnaA, found in Aspergillus flavus (strain ATCC 200026 / FGSC A1120 / IAM 13836 / NRRL 3357 / JCM 12722 / SRRC 167).